The sequence spans 440 residues: Glutamate--tRNA ligase 1 (440 aa).

A 'HIGH' region motif is present at residues 7 to 17 (PSPTGYLHVGN). Residues 238–242 (KISKR) carry the 'KMSKS' region motif. K241 is a binding site for ATP.

The protein belongs to the class-I aminoacyl-tRNA synthetase family. Glutamate--tRNA ligase type 1 subfamily. As to quaternary structure, monomer.

Its subcellular location is the cytoplasm. The enzyme catalyses tRNA(Glu) + L-glutamate + ATP = L-glutamyl-tRNA(Glu) + AMP + diphosphate. Catalyzes the attachment of glutamate to tRNA(Glu) in a two-step reaction: glutamate is first activated by ATP to form Glu-AMP and then transferred to the acceptor end of tRNA(Glu). In Wolbachia sp. subsp. Brugia malayi (strain TRS), this protein is Glutamate--tRNA ligase 1.